A 461-amino-acid chain; its full sequence is Coronin-1A (461 aa).

N-acetylserine is present on serine 2. A Phosphoserine; by PKC modification is found at serine 2. WD repeat units follow at residues 13-63 (HVFG…LVLP), 73-110 (NAPT…MVWE), 123-160 (PVVT…MVWD), 164-204 (GAAM…RIIE), 207-251 (KGTV…ALWD), 258-296 (PLSL…RYFE), and 302-349 (PFLH…EPIA). Residues 403–418 (ELRVNRGLDTGRRRAA) show a composition bias toward basic and acidic residues. The tract at residues 403-432 (ELRVNRGLDTGRRRAAPEASGTPSSDAVSR) is disordered. Threonine 412 is subject to Phosphothreonine; by PKC. Phosphoserine is present on serine 422. The stretch at 424-460 (TPSSDAVSRLEEEMRKLQATVQELQKRLDRLEETVQA) forms a coiled coil. An N6-acetyllysine modification is found at lysine 449.

This sequence belongs to the WD repeat coronin family. As to quaternary structure, binds actin. Phosphorylation at Thr-412 by PKC strongly down-regulates the association with actin. Post-translationally, polyubiquitinated by RNF128 with 'Lys-48'-linked chains, leading to proteasomal degradation. Expressed in brain, thymus, spleen, bone marrow and lymph node. Low in lung and gut.

It localises to the cytoplasm. It is found in the cytoskeleton. The protein localises to the cell cortex. Its subcellular location is the cytoplasmic vesicle. The protein resides in the phagosome membrane. In terms of biological role, may be a crucial component of the cytoskeleton of highly motile cells, functioning both in the invagination of large pieces of plasma membrane, as well as in forming protrusions of the plasma membrane involved in cell locomotion. In mycobacteria-infected cells, its retention on the phagosomal membrane prevents fusion between phagosomes and lysosomes. This chain is Coronin-1A (CORO1A), found in Homo sapiens (Human).